The chain runs to 172 residues: Lipoprotein signal peptidase (172 aa).

4 helical membrane passes run 12-32 (TSAA…VILF), 43-63 (VFAY…LVYN), 77-97 (WQRW…CYLL), and 102-122 (GQKM…GNVI). Residues D132 and D150 contribute to the active site. The chain crosses the membrane as a helical span at residues 142–162 (HWPAFNLADSAITVGAVLLVL).

This sequence belongs to the peptidase A8 family.

It localises to the cell inner membrane. It catalyses the reaction Release of signal peptides from bacterial membrane prolipoproteins. Hydrolyzes -Xaa-Yaa-Zaa-|-(S,diacylglyceryl)Cys-, in which Xaa is hydrophobic (preferably Leu), and Yaa (Ala or Ser) and Zaa (Gly or Ala) have small, neutral side chains.. Its pathway is protein modification; lipoprotein biosynthesis (signal peptide cleavage). This protein specifically catalyzes the removal of signal peptides from prolipoproteins. This is Lipoprotein signal peptidase from Paraburkholderia phytofirmans (strain DSM 17436 / LMG 22146 / PsJN) (Burkholderia phytofirmans).